We begin with the raw amino-acid sequence, 432 residues long: Adenosylhomocysteinase (432 aa).

The disordered stretch occupies residues 1–24 (MSAYSPLSAQLDADTDVDVESTRT). Substrate contacts are provided by aspartate 137 and glutamate 162. 163–165 (TTT) contacts NAD(+). Substrate contacts are provided by lysine 192 and aspartate 196. NAD(+) contacts are provided by residues asparagine 197, 226–231 (GYGYCG), glutamate 249, asparagine 284, 305–307 (AGH), and asparagine 352.

This sequence belongs to the adenosylhomocysteinase family. Requires NAD(+) as cofactor.

The protein resides in the cytoplasm. It carries out the reaction S-adenosyl-L-homocysteine + H2O = L-homocysteine + adenosine. It functions in the pathway amino-acid biosynthesis; L-homocysteine biosynthesis; L-homocysteine from S-adenosyl-L-homocysteine: step 1/1. Functionally, may play a key role in the regulation of the intracellular concentration of adenosylhomocysteine. The chain is Adenosylhomocysteinase from Haloquadratum walsbyi (strain DSM 16790 / HBSQ001).